A 1059-amino-acid chain; its full sequence is Dihydropyrimidine dehydrogenase [NADP(+)] (1059 aa).

In terms of domain architecture, 4Fe-4S ferredoxin-type 1 spans 84–118; sequence ERGALKEAMRCLKCADAPCQKSCPTQLDVKSFITS. Residues Cys-94, Cys-97, Cys-102, Cys-106, Cys-145, Cys-151, Cys-155, and Gln-171 each contribute to the [4Fe-4S] cluster site. FAD-binding positions include 207–211, 231–239, Arg-248, and Leu-274; these read GCGPA and EKRAYIGGL. Residues 354-357, 378-379, Arg-385, 451-453, and 495-501 each bind NADP(+); these read AGDT, RK, AFG, and DVAGVAE. An FAD-binding site is contributed by 494–503; the sequence is GDVAGVAETT. FMN-binding positions include Ser-564 and 588–589; that span reads KT. Substrate is bound by residues Asn-623 and 682 to 684; that span reads NLS. Cys-685 (proton acceptor) is an active-site residue. Lys-723 serves as a coordination point for FMN. 750–751 contacts substrate; the sequence is NT. FMN is bound by residues Gly-781, 807–809, and 830–831; these read TGG and CS. 4Fe-4S ferredoxin-type domains lie at 955–987 and 989–1019; these read KVAI…FDPV and HQPH…MVPR. Positions 964, 967, 970, 974, 998, 1001, 1004, and 1008 each coordinate [4Fe-4S] cluster.

This sequence belongs to the dihydropyrimidine dehydrogenase family. [4Fe-4S] cluster serves as cofactor. Requires FAD as cofactor. The cofactor is FMN.

The catalysed reaction is 5,6-dihydrouracil + NADP(+) = uracil + NADPH + H(+). It functions in the pathway amino-acid biosynthesis; beta-alanine biosynthesis. Its function is as follows. Involved in pyrimidine base degradation. Catalyzes the reduction of uracil and thymine. Involved in the degradation of the chemotherapeutic drug 5-fluorouracil. This chain is Dihydropyrimidine dehydrogenase [NADP(+)] (dpyd-1), found in Caenorhabditis elegans.